The following is a 563-amino-acid chain: Serine/threonine-protein kinase WNK8 (563 aa).

The region spanning 29–286 is the Protein kinase domain; it reads IRYDDVLGRG…ALELSKDPFL (258 aa). Residues 109–112 and lysine 159 contribute to the ATP site; that span reads TELF. Residue aspartate 176 is the Proton acceptor of the active site. The segment covering 426–436 has biased composition (polar residues); that stretch reads TSSHHNQNSPR. Positions 426-459 are disordered; it reads TSSHHNQNSPRLTHEDHEAANQQTVNSKDEEAAG. Serine 509 is subject to Phosphoserine.

Belongs to the protein kinase superfamily. Ser/Thr protein kinase family. WNK subfamily. Interacts with RGS1 and GB1, but not with GPA1. The association with RGS1 at the plasma membrane is triggered by induction of glucose. Binds to EDM2 in nucleus. Autophosphorylated.

Its subcellular location is the nucleus. The catalysed reaction is L-seryl-[protein] + ATP = O-phospho-L-seryl-[protein] + ADP + H(+). It carries out the reaction L-threonyl-[protein] + ATP = O-phospho-L-threonyl-[protein] + ADP + H(+). In terms of biological role, regulates flowering time by modulating the photoperiod pathway. Phosphorylates the vacuolar ATPase subunit C (VATC) and RGS1. Regulates EDM2 that, in turn, modulates development processes. This Arabidopsis thaliana (Mouse-ear cress) protein is Serine/threonine-protein kinase WNK8 (WNK8).